Here is a 554-residue protein sequence, read N- to C-terminus: uncharacterized protein (554 aa).

The next 5 helical transmembrane spans lie at serine 13–leucine 31, isoleucine 36–phenylalanine 58, leucine 73–phenylalanine 92, leucine 99–tryptophan 121, and isoleucine 161–isoleucine 183. RCK C-terminal domains lie at lysine 199–lysine 281 and glutamate 282–asparagine 366. 4 helical membrane passes run isoleucine 376–alanine 395, leucine 405–glycine 422, isoleucine 442–valine 464, and glycine 468–alanine 490.

It belongs to the AAE transporter (TC 2.A.81) family.

Its subcellular location is the cell membrane. This is an uncharacterized protein from Bacteroides thetaiotaomicron (strain ATCC 29148 / DSM 2079 / JCM 5827 / CCUG 10774 / NCTC 10582 / VPI-5482 / E50).